We begin with the raw amino-acid sequence, 185 residues long: Crossover junction endodeoxyribonuclease RuvC (185 aa).

Catalysis depends on residues aspartate 7, glutamate 68, and aspartate 141. Positions 7, 68, and 141 each coordinate Mg(2+).

It belongs to the RuvC family. Homodimer which binds Holliday junction (HJ) DNA. The HJ becomes 2-fold symmetrical on binding to RuvC with unstacked arms; it has a different conformation from HJ DNA in complex with RuvA. In the full resolvosome a probable DNA-RuvA(4)-RuvB(12)-RuvC(2) complex forms which resolves the HJ. The cofactor is Mg(2+).

The protein resides in the cytoplasm. The enzyme catalyses Endonucleolytic cleavage at a junction such as a reciprocal single-stranded crossover between two homologous DNA duplexes (Holliday junction).. In terms of biological role, the RuvA-RuvB-RuvC complex processes Holliday junction (HJ) DNA during genetic recombination and DNA repair. Endonuclease that resolves HJ intermediates. Cleaves cruciform DNA by making single-stranded nicks across the HJ at symmetrical positions within the homologous arms, yielding a 5'-phosphate and a 3'-hydroxyl group; requires a central core of homology in the junction. The consensus cleavage sequence is 5'-(A/T)TT(C/G)-3'. Cleavage occurs on the 3'-side of the TT dinucleotide at the point of strand exchange. HJ branch migration catalyzed by RuvA-RuvB allows RuvC to scan DNA until it finds its consensus sequence, where it cleaves and resolves the cruciform DNA. The polypeptide is Crossover junction endodeoxyribonuclease RuvC (Mycolicibacterium smegmatis (strain ATCC 700084 / mc(2)155) (Mycobacterium smegmatis)).